A 182-amino-acid polypeptide reads, in one-letter code: Isopentenyl-diphosphate Delta-isomerase (182 aa).

Mn(2+)-binding residues include H25 and H32. Residues 30 to 164 (LLHLAFSSWL…PWAFSPWMVM (135 aa)) enclose the Nudix hydrolase domain. C67 is a catalytic residue. H69 is a binding site for Mn(2+). E87 contributes to the Mg(2+) binding site. Positions 114 and 116 each coordinate Mn(2+). The active site involves E116.

Belongs to the IPP isomerase type 1 family. Homodimer. It depends on Mg(2+) as a cofactor. Requires Mn(2+) as cofactor.

Its subcellular location is the cytoplasm. The enzyme catalyses isopentenyl diphosphate = dimethylallyl diphosphate. It functions in the pathway isoprenoid biosynthesis; dimethylallyl diphosphate biosynthesis; dimethylallyl diphosphate from isopentenyl diphosphate: step 1/1. In terms of biological role, catalyzes the 1,3-allylic rearrangement of the homoallylic substrate isopentenyl (IPP) to its highly electrophilic allylic isomer, dimethylallyl diphosphate (DMAPP). The sequence is that of Isopentenyl-diphosphate Delta-isomerase from Escherichia coli O9:H4 (strain HS).